Consider the following 419-residue polypeptide: Serine hydroxymethyltransferase (419 aa).

(6S)-5,6,7,8-tetrahydrofolate contacts are provided by residues L121 and G125–L127. K229 carries the post-translational modification N6-(pyridoxal phosphate)lysine. S354 to F356 contributes to the (6S)-5,6,7,8-tetrahydrofolate binding site.

It belongs to the SHMT family. In terms of assembly, homodimer. Pyridoxal 5'-phosphate is required as a cofactor.

It is found in the cytoplasm. The catalysed reaction is (6R)-5,10-methylene-5,6,7,8-tetrahydrofolate + glycine + H2O = (6S)-5,6,7,8-tetrahydrofolate + L-serine. The protein operates within one-carbon metabolism; tetrahydrofolate interconversion. It participates in amino-acid biosynthesis; glycine biosynthesis; glycine from L-serine: step 1/1. Its function is as follows. Catalyzes the reversible interconversion of serine and glycine with tetrahydrofolate (THF) serving as the one-carbon carrier. This reaction serves as the major source of one-carbon groups required for the biosynthesis of purines, thymidylate, methionine, and other important biomolecules. Also exhibits THF-independent aldolase activity toward beta-hydroxyamino acids, producing glycine and aldehydes, via a retro-aldol mechanism. This chain is Serine hydroxymethyltransferase, found in Coxiella burnetii (strain RSA 493 / Nine Mile phase I).